The following is a 352-amino-acid chain: Endoplasmic reticulum GDP-fucose transporter (352 aa).

The next 10 membrane-spanning stretches (helical) occupy residues 9-29 (LGML…ELII), 34-54 (GAGN…GLVF), 70-90 (YVIL…AFNF), 96-116 (LHMI…IVLL), 126-146 (SSVA…SGDV), 163-183 (FFWW…TAYM), 201-221 (ALFF…GNIV), 249-271 (LMLF…VYVL), 276-298 (ASLT…SIIY), and 305-325 (LNHW…ANVI). Positions 350–352 (KVE) match the Prevents secretion from ER motif.

Belongs to the nucleotide-sugar transporter family. SLC35B subfamily.

It localises to the endoplasmic reticulum membrane. In terms of biological role, sugar transporter that specifically mediates the transport of UDP-N-acetylglucosamine (UDP-GlcNAc), GDP-fucose and UDP-xylose. Functions redundantly with Gfr in the O-fucosylation of Notch, positively regulating Notch signaling. Involved in the biosynthesis of heparan sulfate-glycosaminoglycan (HS-GAG) and in Dpp signaling in the wing imaginal disk. This is Endoplasmic reticulum GDP-fucose transporter from Drosophila melanogaster (Fruit fly).